We begin with the raw amino-acid sequence, 85 residues long: UPF0297 protein CPR_1749 (85 aa).

It belongs to the UPF0297 family.

This is UPF0297 protein CPR_1749 from Clostridium perfringens (strain SM101 / Type A).